The primary structure comprises 188 residues: dCTP deaminase (188 aa).

DCTP is bound by residues Lys-111 to Arg-116, Thr-135 to Glu-137, Gln-156, Tyr-170, Lys-179, and Gln-180. Glu-137 acts as the Proton donor/acceptor in catalysis.

The protein belongs to the dCTP deaminase family. In terms of assembly, homotrimer.

The enzyme catalyses dCTP + H2O + H(+) = dUTP + NH4(+). It participates in pyrimidine metabolism; dUMP biosynthesis; dUMP from dCTP (dUTP route): step 1/2. Functionally, catalyzes the deamination of dCTP to dUTP. The protein is dCTP deaminase of Orientia tsutsugamushi (strain Ikeda) (Rickettsia tsutsugamushi).